A 335-amino-acid chain; its full sequence is Transcriptional coactivator YAP1-B (335 aa).

Positions M1–G13 are enriched in low complexity. A disordered region spans residues M1–H21. At S30 the chain carries Phosphoserine; by LATS1 and LATS2. Positions M114–P124 are enriched in polar residues. Residues M114–N146 form a disordered region. Positions K126–P136 are enriched in pro residues. The transactivation domain stretch occupies residues P137–L335. Residues G145 to R173 adopt a coiled-coil conformation.

The protein belongs to the YAP1 family. In terms of processing, phosphorylated by lats1 and lats2; leading to cytoplasmic translocation and inactivation.

The protein localises to the cytoplasm. The protein resides in the nucleus. It localises to the cell junction. It is found in the tight junction. Its subcellular location is the cell membrane. In terms of biological role, transcriptional regulator which can act both as a coactivator and a corepressor and is the critical downstream regulatory target in the Hippo signaling pathway that plays a pivotal role in organ size control and tumor suppression by restricting proliferation and promoting apoptosis. Plays a key role in tissue tension and 3D tissue shape by regulating cortical actomyosin network formation. The chain is Transcriptional coactivator YAP1-B from Xenopus laevis (African clawed frog).